We begin with the raw amino-acid sequence, 156 residues long: Homeobox-leucine zipper protein ATHB-52 (156 aa).

Residues 8–67 constitute a DNA-binding region (homeobox); sequence GKNKKKRLTQDQVRQLEKCFTMNKKLEPDLKLQLSNQLGLPQRQVAVWFQNKRARFKTQS. The tract at residues 68-96 is leucine-zipper; the sequence is LEVQHCTLQSKHEAALSDKAKLEHQVQFL.

It belongs to the HD-ZIP homeobox family. Class I subfamily. Expressed in roots and flowers.

It localises to the nucleus. Its function is as follows. Probable transcription factor. In Arabidopsis thaliana (Mouse-ear cress), this protein is Homeobox-leucine zipper protein ATHB-52 (ATHB-52).